We begin with the raw amino-acid sequence, 544 residues long: Putative lipase ATG15 (544 aa).

Topologically, residues 1–45 (MVADFDSGWYEGAGDELGQGARNGVLRERLGGNEKAQVVRSRRKA) are cytoplasmic. A helical; Signal-anchor for type II membrane protein membrane pass occupies residues 46–66 (VAWNVLMVLGLILYVLYSACF). Over 67–544 (AQARQWWRTN…NWFGYCTEYA (478 aa)) the chain is Lumenal. N-linked (GlcNAc...) asparagine glycans are attached at residues Asn-200, Asn-229, and Asn-234. Catalysis depends on Ser-362, which acts as the Charge relay system. The interval 508 to 530 (PMPSSVASKPTPTPTSPGSPSST) is disordered.

The protein belongs to the AB hydrolase superfamily. Lipase family. Binds to both phosphatidylinositol (PI) and phosphatidylinositol 3,5-bisphosphate (PIP2).

Its subcellular location is the endosome. The protein resides in the multivesicular body membrane. It localises to the prevacuolar compartment membrane. It catalyses the reaction a triacylglycerol + H2O = a diacylglycerol + a fatty acid + H(+). Functionally, lipase which is essential for lysis of subvacuolar cytoplasm to vacuole targeted bodies and intravacuolar autophagic bodies. Involved in the lysis of intravacuolar multivesicular body (MVB) vesicles. The intravacuolar membrane disintegration by ATG15 is critical to life span extension. In Eremothecium gossypii (strain ATCC 10895 / CBS 109.51 / FGSC 9923 / NRRL Y-1056) (Yeast), this protein is Putative lipase ATG15 (ATG15).